The following is a 416-amino-acid chain: 4-hydroxy-3-methylbut-2-en-1-yl diphosphate synthase (flavodoxin) (416 aa).

4 residues coordinate [4Fe-4S] cluster: Cys304, Cys307, Cys350, and Glu357.

This sequence belongs to the IspG family. [4Fe-4S] cluster is required as a cofactor.

The catalysed reaction is (2E)-4-hydroxy-3-methylbut-2-enyl diphosphate + oxidized [flavodoxin] + H2O + 2 H(+) = 2-C-methyl-D-erythritol 2,4-cyclic diphosphate + reduced [flavodoxin]. Its pathway is isoprenoid biosynthesis; isopentenyl diphosphate biosynthesis via DXP pathway; isopentenyl diphosphate from 1-deoxy-D-xylulose 5-phosphate: step 5/6. Functionally, converts 2C-methyl-D-erythritol 2,4-cyclodiphosphate (ME-2,4cPP) into 1-hydroxy-2-methyl-2-(E)-butenyl 4-diphosphate. The sequence is that of 4-hydroxy-3-methylbut-2-en-1-yl diphosphate synthase (flavodoxin) from Rhizobium johnstonii (strain DSM 114642 / LMG 32736 / 3841) (Rhizobium leguminosarum bv. viciae).